The chain runs to 107 residues: Nucleoid-associated protein A1G_07310 (107 aa).

Belongs to the YbaB/EbfC family. In terms of assembly, homodimer.

The protein localises to the cytoplasm. It is found in the nucleoid. In terms of biological role, binds to DNA and alters its conformation. May be involved in regulation of gene expression, nucleoid organization and DNA protection. The chain is Nucleoid-associated protein A1G_07310 from Rickettsia rickettsii (strain Sheila Smith).